A 523-amino-acid chain; its full sequence is GMP synthase [glutamine-hydrolyzing] (523 aa).

The region spanning 9-198 (PVLVVDFGAQ…LTEIAGLEQN (190 aa)) is the Glutamine amidotransferase type-1 domain. Cys-86 functions as the Nucleophile in the catalytic mechanism. Active-site residues include His-172 and Glu-174. Residues 199-397 (WTAANIAEEL…LGLPEEIVGR (199 aa)) form the GMPS ATP-PPase domain. 227 to 233 (SGGVDSA) contacts ATP.

As to quaternary structure, homodimer.

It catalyses the reaction XMP + L-glutamine + ATP + H2O = GMP + L-glutamate + AMP + diphosphate + 2 H(+). Its pathway is purine metabolism; GMP biosynthesis; GMP from XMP (L-Gln route): step 1/1. Catalyzes the synthesis of GMP from XMP. The sequence is that of GMP synthase [glutamine-hydrolyzing] from Corynebacterium glutamicum (strain R).